The following is a 254-amino-acid chain: MEGVMGQVEKRPISTIVFIVAMQKEAQPLINRLRLVEEVNTPFPKEVTWIMFKGMYKDLNINIVCPGKDSTLGVESVGTVPASLVTYASILAIQPDLIINAGTAGGFKAKGACISDVYVVSTVAFHDRRIPVPVLDIYGVGMRNTFPTPNLIKELNLKVGRLSTGDSMDMSPHDEESITANDATVKDMEGAAVAYVADIFKVPTILIKGVTDIVDGNRPTSEEFLENLAAVTAKLDESLTKVIDFISGKCLSDL.

Methionine 1 carries the post-translational modification N-acetylmethionine. The active-site Proton acceptor is the glutamate 25. S-methyl-5'-thioadenosine contacts are provided by residues threonine 103 and lysine 186 to glutamate 189. Adenine is bound by residues lysine 186 and aspartate 212. Catalysis depends on aspartate 212, which acts as the Proton donor.

It belongs to the PNP/UDP phosphorylase family. MtnN subfamily. Homodimer.

It carries out the reaction S-methyl-5'-thioadenosine + H2O = 5-(methylsulfanyl)-D-ribose + adenine. The catalysed reaction is S-adenosyl-L-homocysteine + H2O = S-(5-deoxy-D-ribos-5-yl)-L-homocysteine + adenine. It catalyses the reaction 5'-deoxyadenosine + H2O = 5-deoxy-D-ribose + adenine. Its pathway is amino-acid biosynthesis; L-methionine biosynthesis via salvage pathway; S-methyl-5-thio-alpha-D-ribose 1-phosphate from S-methyl-5'-thioadenosine (hydrolase route): step 1/2. Its function is as follows. Enzyme of the methionine cycle that catalyzes the irreversible cleavage of the glycosidic bond in 5'-methylthioadenosine (MTA) and S-adenosylhomocysteine (SAH/AdoHcy) to a lesser extent, to adenine and the corresponding thioribose, 5'-methylthioribose and S-ribosylhomocysteine, respectively. Contributes to the maintenance of AdoMet homeostasis and is required to sustain high rates of ethylene synthesis. The sequence is that of 5'-methylthioadenosine/S-adenosylhomocysteine nucleosidase (MTN2) from Arabidopsis thaliana (Mouse-ear cress).